The chain runs to 279 residues: Phosphatidylglycerol--prolipoprotein diacylglyceryl transferase (279 aa).

3 helical membrane-spanning segments follow: residues 18–38 (LSVR…YFVA), 55–75 (IIFY…VIFQ), and 89–109 (IWHG…AGVI). R137 contacts a 1,2-diacyl-sn-glycero-3-phospho-(1'-sn-glycerol). 2 consecutive transmembrane segments (helical) span residues 203 to 223 (LGET…FIEG) and 235 to 255 (IRVA…LIVY).

The protein belongs to the Lgt family.

Its subcellular location is the cell membrane. The catalysed reaction is L-cysteinyl-[prolipoprotein] + a 1,2-diacyl-sn-glycero-3-phospho-(1'-sn-glycerol) = an S-1,2-diacyl-sn-glyceryl-L-cysteinyl-[prolipoprotein] + sn-glycerol 1-phosphate + H(+). Its pathway is protein modification; lipoprotein biosynthesis (diacylglyceryl transfer). Its function is as follows. Catalyzes the transfer of the diacylglyceryl group from phosphatidylglycerol to the sulfhydryl group of the N-terminal cysteine of a prolipoprotein, the first step in the formation of mature lipoproteins. The sequence is that of Phosphatidylglycerol--prolipoprotein diacylglyceryl transferase from Staphylococcus aureus (strain USA300).